A 288-amino-acid chain; its full sequence is MASLRDIKGRINSTKKTSQITKAMHMVSNSKLRRAEENAKSFYPYMEKMQDAVTAIGGSNSDANHPMLQKRPVKKTGYLVITCDKGLAGPYNANILKSVTQKIQERHNNNPAEYGILVIGRVGYDFLRARDYNVEGQIIGLSDQPSFKSIKDISHTAVSRFETGEYDELYMHYSHFISVLEQEVHERKILPISKEEVSGESKLSNYEFEPDKDAILEVILPQYAESLIYGAILDGKASEHASRMTAMKNATDNAKELIDDLSLQYNRARQAAITQQITEIVGGAAALE.

This sequence belongs to the ATPase gamma chain family. F-type ATPases have 2 components, CF(1) - the catalytic core - and CF(0) - the membrane proton channel. CF(1) has five subunits: alpha(3), beta(3), gamma(1), delta(1), epsilon(1). CF(0) has three main subunits: a, b and c.

It is found in the cell membrane. Functionally, produces ATP from ADP in the presence of a proton gradient across the membrane. The gamma chain is believed to be important in regulating ATPase activity and the flow of protons through the CF(0) complex. This is ATP synthase gamma chain from Macrococcus caseolyticus (strain JCSC5402) (Macrococcoides caseolyticum).